The primary structure comprises 273 residues: 2,3,4,5-tetrahydropyridine-2,6-dicarboxylate N-succinyltransferase (273 aa).

Substrate contacts are provided by R104 and D141.

The protein belongs to the transferase hexapeptide repeat family. Homotrimer.

It localises to the cytoplasm. It catalyses the reaction (S)-2,3,4,5-tetrahydrodipicolinate + succinyl-CoA + H2O = (S)-2-succinylamino-6-oxoheptanedioate + CoA. It functions in the pathway amino-acid biosynthesis; L-lysine biosynthesis via DAP pathway; LL-2,6-diaminopimelate from (S)-tetrahydrodipicolinate (succinylase route): step 1/3. In Chromobacterium violaceum (strain ATCC 12472 / DSM 30191 / JCM 1249 / CCUG 213 / NBRC 12614 / NCIMB 9131 / NCTC 9757 / MK), this protein is 2,3,4,5-tetrahydropyridine-2,6-dicarboxylate N-succinyltransferase.